Consider the following 457-residue polypeptide: MKLSRIVRGANQWLSKTPERALDQAYRAALKIKELEDKHFQGKKVSPDTAQYGDSVMTYFEAELQGYLQTIKVRLGVFKTSRLFTSLSEPTHPRDERIALEQDSHGNRLLQKLKFIDDVISKYKTNEIVTAHSSDNGVIRGSELTPLNQQQVVIEANGKVPPPKKTNPQPAKKLTNLTVDEPKNKLDSATDKTGVLPRSFLNTINRIKQEIDPKSEETEEAVLKRFRTSRYKTAISIKFILLLIIVPLLTHQLTKTFFLTPVVEHYFSQHEQVVFINKDLEEEAFVELRSFEEALHFKSLIGIIPKLTQEEIEQEVRLKAEEISESYRLEGINAISNVFADIFSLIAFGVVIATSRKEIEIVKSFLDGILYSLSDSAKAFLIILFTDMFVGFHSPHGWEVILEGVARHFGLPENRDFNFLFIATFPVILDTVLKYWIFRYLNRISPSAVATYRNMNE.

Helical transmembrane passes span 239-259, 332-352, 368-390, and 417-437; these read FILL…TFFL, INAI…GVVI, GILY…DMFV, and FNFL…KYWI.

This sequence belongs to the CemA family.

It is found in the cell inner membrane. Functionally, required for H(+) efflux immediately after light irradiation to form a rapid H(+) concentration gradient across the thylakoid membranes. Together with PxcL, contributes to transient H(+) uptake following dark to light transition. The chain is Proton extrusion protein PxcA from Gloeothece citriformis (strain PCC 7424) (Cyanothece sp. (strain PCC 7424)).